We begin with the raw amino-acid sequence, 571 residues long: MRTSQYLLSTLKETPADAVVISHQLLLRAGMIRRLASGLYTWLPMGLRVLRKVETIVREEMNAAGALEVLMPAVQPAELWQESGRWEQYGPELLRLKDRHEREFCVGPTHEEVITDLARNELNSYKQLPINFYQIQTKFRDEIRPRFGLMRGREFIMKDAYSFHLSQDSLQQTYDGMYQAYSKIFSRLGLDFRPVQADNGSIGGSGSHEFHVLANSGEDDIVFSDSSDYAANIEKAEAVPRESARGSATEDMRLVDTPNTKTITALVDGFQLPIEKTIKTLVVHGAEEGTLVALIVRGDHELNEIKAANQPLVASPLVFASEAEIRAAIGAGPGSLGPVNLPIACIVDRSVALMSDFAAGANIEDKHYFGVNWERDLPLPEVADLRNVVEGDPSPDGKGTLVIKRGIEVGHIFQLGTKYSEAMKLNVLSEQGKPVNLIMGCYGIGVSRVVAAAIEQNHDERGILWPSALAPFQIALVPLKYETESVKQATDKLYAELTAAGFEVLLDDRDKKTSPGVKFADMELIGIPHRIVISDRGLNEGVLEYKGRRDSESQNLPIGELMSFITEKLSR.

Belongs to the class-II aminoacyl-tRNA synthetase family. ProS type 1 subfamily. Homodimer.

The protein localises to the cytoplasm. It carries out the reaction tRNA(Pro) + L-proline + ATP = L-prolyl-tRNA(Pro) + AMP + diphosphate. Catalyzes the attachment of proline to tRNA(Pro) in a two-step reaction: proline is first activated by ATP to form Pro-AMP and then transferred to the acceptor end of tRNA(Pro). As ProRS can inadvertently accommodate and process non-cognate amino acids such as alanine and cysteine, to avoid such errors it has two additional distinct editing activities against alanine. One activity is designated as 'pretransfer' editing and involves the tRNA(Pro)-independent hydrolysis of activated Ala-AMP. The other activity is designated 'posttransfer' editing and involves deacylation of mischarged Ala-tRNA(Pro). The misacylated Cys-tRNA(Pro) is not edited by ProRS. This chain is Proline--tRNA ligase, found in Pseudomonas aeruginosa (strain UCBPP-PA14).